The chain runs to 418 residues: FK506-binding protein 3 (418 aa).

Disordered regions lie at residues 49–133 (PSTL…DDEF), 172–273 (SLTG…ETKK), and 289–309 (LEEG…KPKT). A compositionally biased stretch (acidic residues) spans 61–89 (YDDEDDAGGLLGDYDEDELDISEEEEEEE). Basic residues predominate over residues 93–103 (KSKKGKGKGKS). Composition is skewed to acidic residues over residues 108–133 (EEEE…DDEF) and 186–224 (GYDD…DASD). A compositionally biased stretch (basic and acidic residues) spans 225–239 (VEAKIQELVEKEQSK). The span at 251-264 (PEEEEEEEEEEEEE) shows a compositional bias: acidic residues. The region spanning 332–418 (GSKVGMRYIG…TFDVKLVSLK (87 aa)) is the PPIase FKBP-type domain.

It belongs to the FKBP-type PPIase family. FKBP3/4 subfamily.

The protein localises to the nucleus. It is found in the nucleolus. It carries out the reaction [protein]-peptidylproline (omega=180) = [protein]-peptidylproline (omega=0). Its activity is regulated as follows. Inhibited by both FK506 and rapamycin. PPIases accelerate the folding of proteins. It catalyzes the cis-trans isomerization of proline imidic peptide bonds in oligopeptides. This Kluyveromyces lactis (strain ATCC 8585 / CBS 2359 / DSM 70799 / NBRC 1267 / NRRL Y-1140 / WM37) (Yeast) protein is FK506-binding protein 3 (FPR3).